A 307-amino-acid polypeptide reads, in one-letter code: Elongation factor Ts (307 aa).

The segment at 80-83 (TDFV) is involved in Mg(2+) ion dislocation from EF-Tu.

This sequence belongs to the EF-Ts family.

Its subcellular location is the cytoplasm. Functionally, associates with the EF-Tu.GDP complex and induces the exchange of GDP to GTP. It remains bound to the aminoacyl-tRNA.EF-Tu.GTP complex up to the GTP hydrolysis stage on the ribosome. The protein is Elongation factor Ts of Xanthobacter autotrophicus (strain ATCC BAA-1158 / Py2).